The primary structure comprises 79 residues: RVSSAVSSLVSSGPTTPAALSNTISSAVSQISASNPGLSGCDVLVQALLEVVSALVHILGSSSVGQINYGASAQYAQMV.

Belongs to the silk fibroin family. Major subunit, with spidroin 2, of the dragline silk.

The protein resides in the secreted. Its subcellular location is the extracellular space. Functionally, spiders' major ampullate silk possesses unique characteristics of strength and elasticity. Fibroin consists of pseudocrystalline regions of antiparallel beta-sheet interspersed with elastic amorphous segments. This chain is Spidroin-1, found in Araneus bicentenarius (Giant lichen orbweaver).